Here is a 79-residue protein sequence, read N- to C-terminus: Conotoxin VnMKLT1-01122 (79 aa).

A signal peptide spans 1–22 (MKLTCMKIVAVLFLTAWTFVTA). Residues 23 to 48 (DDSRNGLEYLFPKAHYEMNPEASKLN) constitute a propeptide that is removed on maturation. The residue at position 51 (Gln-51) is a Pyrrolidone carboxylic acid. 3 disulfide bridges follow: Cys-53-Cys-70, Cys-60-Cys-74, and Cys-69-Cys-78.

This sequence belongs to the conotoxin O1 superfamily. Expressed by the venom duct.

It is found in the secreted. This Conus ventricosus (Mediterranean cone) protein is Conotoxin VnMKLT1-01122.